Consider the following 267-residue polypeptide: MRQSKKLGQCFLKDKNFVKKAINRAEITNNDIVLEVGLGEGALTKELAKIAKKVYVIELDERLKPFADEITAEFENVEIIWSDALKVDLKNLGFNKIVANLPYQISSPITFKFLEEDFETAVLMYQYEFAKRMAGKPDTKEYSRLSVAVQYNADVEFICKVPPSAFSPKPDVNSAIVKLTKREPKYHVKDEEFFKKVLKAVFQHRNRTIKRALIDSSHEIEVDRDNLKGILEKIENEFDFTQRVFKTPPEKIGDLSNLLYDEIANLE.

S-adenosyl-L-methionine is bound by residues L12, G37, E58, D83, and N100.

This sequence belongs to the class I-like SAM-binding methyltransferase superfamily. rRNA adenine N(6)-methyltransferase family. RsmA subfamily.

The protein localises to the cytoplasm. In terms of biological role, specifically dimethylates two adjacent adenosines in the loop of a conserved hairpin near the 3'-end of 16S rRNA in the 30S particle. May play a critical role in biogenesis of 30S subunits. The polypeptide is Probable ribosomal RNA small subunit methyltransferase A (Methanococcus maripaludis (strain DSM 14266 / JCM 13030 / NBRC 101832 / S2 / LL)).